A 442-amino-acid chain; its full sequence is Chromosomal replication initiator protein DnaA (442 aa).

The domain I, interacts with DnaA modulators stretch occupies residues 1-75 (MDAWPRCLER…GNGEVALAVG (75 aa)). The domain II stretch occupies residues 75-104 (GSRPRAPEPLPAPQAVASAPAAAPIVPFAG). The domain III, AAA+ region stretch occupies residues 105 to 322 (NLDSHYTFAN…GALNTLVARA (218 aa)). The ATP site is built by glycine 150, glycine 152, lysine 153, and threonine 154. A domain IV, binds dsDNA region spans residues 323-442 (NFTGRSITVE…WEKLIRKLSE (120 aa)).

This sequence belongs to the DnaA family. Oligomerizes as a right-handed, spiral filament on DNA at oriC.

The protein resides in the cytoplasm. Its function is as follows. Plays an essential role in the initiation and regulation of chromosomal replication. ATP-DnaA binds to the origin of replication (oriC) to initiate formation of the DNA replication initiation complex once per cell cycle. Binds the DnaA box (a 9 base pair repeat at the origin) and separates the double-stranded (ds)DNA. Forms a right-handed helical filament on oriC DNA; dsDNA binds to the exterior of the filament while single-stranded (ss)DNA is stabiized in the filament's interior. The ATP-DnaA-oriC complex binds and stabilizes one strand of the AT-rich DNA unwinding element (DUE), permitting loading of DNA polymerase. After initiation quickly degrades to an ADP-DnaA complex that is not apt for DNA replication. Binds acidic phospholipids. This is Chromosomal replication initiator protein DnaA from Xanthomonas campestris pv. campestris (strain B100).